The following is a 117-amino-acid chain: Large ribosomal subunit protein bL20 (117 aa).

Belongs to the bacterial ribosomal protein bL20 family.

In terms of biological role, binds directly to 23S ribosomal RNA and is necessary for the in vitro assembly process of the 50S ribosomal subunit. It is not involved in the protein synthesizing functions of that subunit. The protein is Large ribosomal subunit protein bL20 of Campylobacter hominis (strain ATCC BAA-381 / DSM 21671 / CCUG 45161 / LMG 19568 / NCTC 13146 / CH001A).